We begin with the raw amino-acid sequence, 131 residues long: Steroid Delta-isomerase (131 aa).

Residue Tyr16 is the Proton donor of the active site. Asp40 functions as the Proton acceptor in the catalytic mechanism. Substrate is bound at residue Asp103.

Homodimer.

It carries out the reaction a 3-oxo-Delta(5)-steroid = a 3-oxo-Delta(4)-steroid. The sequence is that of Steroid Delta-isomerase (ksi) from Pseudomonas putida (Arthrobacter siderocapsulatus).